The primary structure comprises 218 residues: Mitochondrial fission factor (218 aa).

The Cytoplasmic segment spans residues 1–198 (MAEISRIQYE…ENKERAKREM (198 aa)). The residue at position 89 (T89) is a Phosphothreonine. S129, S131, S146, and S171 each carry phosphoserine. Residues 167–198 (VDAASLRRQIIKLNRRLQLLEEENKERAKREM) are a coiled coil. Residues 199 to 216 (VMYSITVAFWLLNSWLWF) form a helical; Anchor for type IV membrane protein membrane-spanning segment. The Mitochondrial intermembrane portion of the chain corresponds to 217 to 218 (RR).

The protein belongs to the Tango11 family. In terms of assembly, homodimer. Interacts with DNM1L. Interacts with C11orf65/MFI; the interaction inhibits MFF interaction with DNM1L.

It localises to the mitochondrion outer membrane. The protein localises to the peroxisome. It is found in the cytoplasmic vesicle. The protein resides in the secretory vesicle. Its subcellular location is the synaptic vesicle. Functionally, plays a role in mitochondrial and peroxisomal fission. Promotes the recruitment and association of the fission mediator dynamin-related protein 1 (DNM1L) to the mitochondrial surface. May be involved in regulation of synaptic vesicle membrane dynamics by recruitment of DNM1L to clathrin-containing vesicles. This Bos taurus (Bovine) protein is Mitochondrial fission factor (MFF).